Consider the following 121-residue polypeptide: Large ribosomal subunit protein bL12 (121 aa).

Belongs to the bacterial ribosomal protein bL12 family. In terms of assembly, homodimer. Part of the ribosomal stalk of the 50S ribosomal subunit. Forms a multimeric L10(L12)X complex, where L10 forms an elongated spine to which 2 to 4 L12 dimers bind in a sequential fashion. Binds GTP-bound translation factors.

Forms part of the ribosomal stalk which helps the ribosome interact with GTP-bound translation factors. Is thus essential for accurate translation. The protein is Large ribosomal subunit protein bL12 of Streptococcus equi subsp. equi (strain 4047).